The primary structure comprises 520 residues: Bifunctional purine biosynthesis protein PurH (520 aa).

One can recognise an MGS-like domain in the interval 1-146 (MAPVALLSVS…KNHADVAVLT (146 aa)).

The protein belongs to the PurH family.

The enzyme catalyses (6R)-10-formyltetrahydrofolate + 5-amino-1-(5-phospho-beta-D-ribosyl)imidazole-4-carboxamide = 5-formamido-1-(5-phospho-D-ribosyl)imidazole-4-carboxamide + (6S)-5,6,7,8-tetrahydrofolate. The catalysed reaction is IMP + H2O = 5-formamido-1-(5-phospho-D-ribosyl)imidazole-4-carboxamide. Its pathway is purine metabolism; IMP biosynthesis via de novo pathway; 5-formamido-1-(5-phospho-D-ribosyl)imidazole-4-carboxamide from 5-amino-1-(5-phospho-D-ribosyl)imidazole-4-carboxamide (10-formyl THF route): step 1/1. It functions in the pathway purine metabolism; IMP biosynthesis via de novo pathway; IMP from 5-formamido-1-(5-phospho-D-ribosyl)imidazole-4-carboxamide: step 1/1. The polypeptide is Bifunctional purine biosynthesis protein PurH (Synechococcus sp. (strain CC9605)).